Reading from the N-terminus, the 265-residue chain is Capsule polysaccharide export inner-membrane protein CtrC (265 aa).

6 helical membrane-spanning segments follow: residues 37–57 (IGFLWLFVEPLLMTFVIVLMW), 67–84 (TLNIVAFAITGYPMLMMW), 121–141 (IAGATIAQIVIMAVLIAIGWI), 148–168 (FYMLMAWLLMAFFAIGLGLVI), 178–198 (FGKIWGTLTFVMMPLSGAFFF), and 238–258 (WYIVLCNLVLLLFGLAMVSKF). The ABC transmembrane type-2 domain maps to 37–258 (IGFLWLFVEP…LFGLAMVSKF (222 aa)).

It belongs to the ABC-2 integral membrane protein family.

It is found in the cell inner membrane. In terms of biological role, may form an ATP-driven capsule polysaccharide export apparatus, in association with the CtrB and CtrD proteins. The chain is Capsule polysaccharide export inner-membrane protein CtrC (ctrC) from Neisseria meningitidis serogroup B (strain ATCC BAA-335 / MC58).